The primary structure comprises 111 residues: Large ribosomal subunit protein P1 (111 aa).

The tract at residues 84-111 (PAEAAAAEEKKEEEKEESDEDMGFGLFD) is disordered.

This sequence belongs to the eukaryotic ribosomal protein P1/P2 family. As to quaternary structure, P1 and P2 exist as dimers at the large ribosomal subunit. Phosphorylated.

Plays an important role in the elongation step of protein synthesis. This chain is Large ribosomal subunit protein P1, found in Aspergillus fumigatus (strain ATCC MYA-4609 / CBS 101355 / FGSC A1100 / Af293) (Neosartorya fumigata).